The sequence spans 164 residues: Lipoprotein signal peptidase (164 aa).

Helical transmembrane passes span 12–32, 70–90, and 102–122; these read WLWL…LILQ, WFFA…MYRS, and ALII…GFVV. Catalysis depends on residues Asp123 and Asp141. A helical transmembrane segment spans residues 137-157; the sequence is FNLADTAICVGAALIVLEGFL.

The protein belongs to the peptidase A8 family.

Its subcellular location is the cell inner membrane. The enzyme catalyses Release of signal peptides from bacterial membrane prolipoproteins. Hydrolyzes -Xaa-Yaa-Zaa-|-(S,diacylglyceryl)Cys-, in which Xaa is hydrophobic (preferably Leu), and Yaa (Ala or Ser) and Zaa (Gly or Ala) have small, neutral side chains.. Its pathway is protein modification; lipoprotein biosynthesis (signal peptide cleavage). Functionally, this protein specifically catalyzes the removal of signal peptides from prolipoproteins. The polypeptide is Lipoprotein signal peptidase (Escherichia coli O6:K15:H31 (strain 536 / UPEC)).